The chain runs to 279 residues: Ribosomal RNA small subunit methyltransferase A (279 aa).

The S-adenosyl-L-methionine site is built by His-15, Leu-17, Gly-42, Glu-64, Asp-89, and Asn-109.

It belongs to the class I-like SAM-binding methyltransferase superfamily. rRNA adenine N(6)-methyltransferase family. RsmA subfamily.

It localises to the cytoplasm. It carries out the reaction adenosine(1518)/adenosine(1519) in 16S rRNA + 4 S-adenosyl-L-methionine = N(6)-dimethyladenosine(1518)/N(6)-dimethyladenosine(1519) in 16S rRNA + 4 S-adenosyl-L-homocysteine + 4 H(+). Specifically dimethylates two adjacent adenosines (A1518 and A1519) in the loop of a conserved hairpin near the 3'-end of 16S rRNA in the 30S particle. May play a critical role in biogenesis of 30S subunits. The chain is Ribosomal RNA small subunit methyltransferase A from Prochlorococcus marinus (strain SARG / CCMP1375 / SS120).